We begin with the raw amino-acid sequence, 232 residues long: MESNKMKSITKMTVNTLQMDSCKAAAKRFKNATWELISNDFNLDIMNMFCILYYACTSHELKLDELVFQTAHKVIMNEVSVSIGESRMFIRIYVSFHMLMGDLNELLHHGISKFEGSPIKDMTSYLIYGEEYVRNLFQSINSTRATPVYQLFITKVPRQFPAITHGDSEYTYMLMVHNYLSTQSIAGVSHTPSNSDNYVIRTAEEYVHHHYAQLDRQASDNKMRPESSDQME.

This is an uncharacterized protein from Eriophyes pyri (pearleaf blister mite).